Consider the following 951-residue polypeptide: AP-1 complex subunit beta-1 (951 aa).

Lys318 carries the post-translational modification N6-acetyllysine. Position 574 is a 3'-nitrotyrosine (Tyr574).

The protein belongs to the adaptor complexes large subunit family. As to quaternary structure, adaptor protein complex 1 (AP-1) is a heterotetramer composed of two large adaptins (gamma-type subunit AP1G1 and beta-type subunit AP1B1), a medium adaptin (mu-type subunit AP1M1 or AP1M2) and a small adaptin (sigma-type subunit AP1S1 or AP1S2 or AP1S3).

It is found in the cytoplasmic vesicle. The protein resides in the clathrin-coated vesicle membrane. The protein localises to the golgi apparatus. Its function is as follows. Subunit of clathrin-associated adaptor protein complex 1 that plays a role in protein sorting in the late-Golgi/trans-Golgi network (TGN) and/or endosomes. The AP complexes mediate both the recruitment of clathrin to membranes and the recognition of sorting signals within the cytosolic tails of transmembrane cargo molecules. In Bos taurus (Bovine), this protein is AP-1 complex subunit beta-1 (AP2B1).